The chain runs to 178 residues: Small ribosomal subunit protein uS5 (178 aa).

The region spanning 15–78 is the S5 DRBM domain; the sequence is FEEKIIEIRR…SAAKRNIIEV (64 aa).

It belongs to the universal ribosomal protein uS5 family. Part of the 30S ribosomal subunit. Contacts proteins S4 and S8.

With S4 and S12 plays an important role in translational accuracy. Functionally, located at the back of the 30S subunit body where it stabilizes the conformation of the head with respect to the body. This chain is Small ribosomal subunit protein uS5, found in Thermotoga sp. (strain RQ2).